A 427-amino-acid chain; its full sequence is 3-phosphoshikimate 1-carboxyvinyltransferase (427 aa).

K20 provides a ligand contact to phosphoenolpyruvate. Residues S21 and R25 each coordinate 3-phosphoshikimate. Phosphoenolpyruvate contacts are provided by G92 and R120. Residues S166, A167, Q168, D312, and K339 each contribute to the 3-phosphoshikimate site. Residue Q168 participates in phosphoenolpyruvate binding. Residue D312 is the Proton acceptor of the active site. The phosphoenolpyruvate site is built by R343 and R385.

Homotetramer.

The protein localises to the cytoplasm. The catalysed reaction is 3-phosphoshikimate + phosphoenolpyruvate = 5-O-(1-carboxyvinyl)-3-phosphoshikimate + phosphate. It functions in the pathway metabolic intermediate biosynthesis; chorismate biosynthesis; chorismate from D-erythrose 4-phosphate and phosphoenolpyruvate: step 6/7. Competitively inhibited by glyphosate. Activated by ammonium, rubidium or potassium ions. In terms of biological role, catalyzes the transfer of the enolpyruvyl moiety of phosphoenolpyruvate (PEP) to the 5-hydroxyl of shikimate-3-phosphate (S3P) to produce enolpyruvyl shikimate-3-phosphate and inorganic phosphate. This chain is 3-phosphoshikimate 1-carboxyvinyltransferase, found in Streptococcus pneumoniae serotype 4 (strain ATCC BAA-334 / TIGR4).